Consider the following 396-residue polypeptide: 1-deoxy-D-xylulose 5-phosphate reductoisomerase (396 aa).

NADPH is bound by residues threonine 15, glycine 16, isoleucine 18, and asparagine 127. Lysine 128 contributes to the 1-deoxy-D-xylulose 5-phosphate binding site. Glutamate 129 contributes to the NADPH binding site. Aspartate 153 is a binding site for Mn(2+). 4 residues coordinate 1-deoxy-D-xylulose 5-phosphate: serine 154, glutamate 155, serine 177, and histidine 200. Residue glutamate 155 coordinates Mn(2+). Glycine 206 lines the NADPH pocket. Serine 213, asparagine 218, lysine 219, and glutamate 222 together coordinate 1-deoxy-D-xylulose 5-phosphate. Residue glutamate 222 coordinates Mn(2+).

Belongs to the DXR family. The cofactor is Mg(2+). Requires Mn(2+) as cofactor.

The enzyme catalyses 2-C-methyl-D-erythritol 4-phosphate + NADP(+) = 1-deoxy-D-xylulose 5-phosphate + NADPH + H(+). It functions in the pathway isoprenoid biosynthesis; isopentenyl diphosphate biosynthesis via DXP pathway; isopentenyl diphosphate from 1-deoxy-D-xylulose 5-phosphate: step 1/6. Functionally, catalyzes the NADPH-dependent rearrangement and reduction of 1-deoxy-D-xylulose-5-phosphate (DXP) to 2-C-methyl-D-erythritol 4-phosphate (MEP). The protein is 1-deoxy-D-xylulose 5-phosphate reductoisomerase of Anaplasma marginale (strain Florida).